Consider the following 46-residue polypeptide: uncharacterized protein (46 aa).

A disordered region spans residues 1–46 (MEVTPLETGRARSHQKASTAAQPHAADEKMTGSTARRYLSQDHQSV).

This is an uncharacterized protein from Treponema pallidum (strain Nichols).